We begin with the raw amino-acid sequence, 122 residues long: Small ribosomal subunit protein uS13 (122 aa).

The disordered stretch occupies residues 93–122; that stretch reads RRGLPVRGQKTKTNARTRKGPKKTIANKKK.

This sequence belongs to the universal ribosomal protein uS13 family. As to quaternary structure, part of the 30S ribosomal subunit. Forms a loose heterodimer with protein S19. Forms two bridges to the 50S subunit in the 70S ribosome.

Located at the top of the head of the 30S subunit, it contacts several helices of the 16S rRNA. In the 70S ribosome it contacts the 23S rRNA (bridge B1a) and protein L5 of the 50S subunit (bridge B1b), connecting the 2 subunits; these bridges are implicated in subunit movement. Contacts the tRNAs in the A and P-sites. This Clostridium beijerinckii (strain ATCC 51743 / NCIMB 8052) (Clostridium acetobutylicum) protein is Small ribosomal subunit protein uS13.